The chain runs to 474 residues: Nitrogenase vanadium-iron protein alpha chain (474 aa).

3 residues coordinate [8Fe-7S] cluster: C49, C75, and C138. [7Fe-V-9S-C-homocitryl] cluster is bound by residues C257 and H423.

This sequence belongs to the NifD/NifK/NifE/NifN family. Hexamer of two alpha, two beta, and two delta chains. It depends on [8Fe-7S] cluster as a cofactor. [7Fe-V-9S-C-homocitryl] cluster is required as a cofactor.

The catalysed reaction is N2 + 8 reduced [2Fe-2S]-[ferredoxin] + 16 ATP + 16 H2O = H2 + 8 oxidized [2Fe-2S]-[ferredoxin] + 2 NH4(+) + 16 ADP + 16 phosphate + 6 H(+). Functionally, this vanadium-iron protein is part of the nitrogenase complex that catalyzes the key enzymatic reactions in nitrogen fixation. In Azotobacter vinelandii, this protein is Nitrogenase vanadium-iron protein alpha chain (vnfD).